The primary structure comprises 270 residues: Glutamate racemase (270 aa).

Residues 7 to 8 and 39 to 40 each bind substrate; these read DS and YG. The Proton donor/acceptor role is filled by Cys70. Residue 71–72 coordinates substrate; that stretch reads NT. The Proton donor/acceptor role is filled by Cys194. Position 195–196 (195–196) interacts with substrate; it reads TH.

This sequence belongs to the aspartate/glutamate racemases family.

The catalysed reaction is L-glutamate = D-glutamate. Its pathway is cell wall biogenesis; peptidoglycan biosynthesis. Provides the (R)-glutamate required for cell wall biosynthesis. The sequence is that of Glutamate racemase from Paracoccus denitrificans (strain Pd 1222).